The sequence spans 517 residues: Transcription factor MTB3 (517 aa).

Residues Gly290 to Asn331 are disordered. Positions Arg297–Lys314 are enriched in basic and acidic residues. Positions Glu327–Arg340 are basic motif; degenerate. Residues Glu327–Leu376 form the bHLH domain. The interval Glu341–Leu376 is helix-loop-helix motif.

It is found in the nucleus. Its function is as follows. Transcription factor that negatively regulates jasmonate (JA) signaling. Negatively regulates JA-dependent response to wounding, JA-induced expression of defense genes, JA-dependent responses against herbivorous insects, and JA-dependent resistance against Botrytis cinerea infection. Plays a positive role in resistance against the bacterial pathogen Pseudomonas syringae pv tomato DC3000. The sequence is that of Transcription factor MTB3 from Solanum lycopersicum (Tomato).